Consider the following 332-residue polypeptide: Ferredoxin--NADP reductase 1 (332 aa).

FAD is bound by residues Asp35, Lys43, Phe48, Val88, Phe123, Asp284, and Thr325.

Belongs to the ferredoxin--NADP reductase type 2 family. Homodimer. It depends on FAD as a cofactor.

The enzyme catalyses 2 reduced [2Fe-2S]-[ferredoxin] + NADP(+) + H(+) = 2 oxidized [2Fe-2S]-[ferredoxin] + NADPH. In Listeria monocytogenes serovar 1/2a (strain ATCC BAA-679 / EGD-e), this protein is Ferredoxin--NADP reductase 1.